Reading from the N-terminus, the 92-residue chain is Small ribosomal subunit protein uS19 (92 aa).

This sequence belongs to the universal ribosomal protein uS19 family.

Its function is as follows. Protein S19 forms a complex with S13 that binds strongly to the 16S ribosomal RNA. This is Small ribosomal subunit protein uS19 from Photobacterium profundum (strain SS9).